A 163-amino-acid chain; its full sequence is 2-C-methyl-D-erythritol 2,4-cyclodiphosphate synthase (163 aa).

Residues aspartate 8 and histidine 10 each coordinate a divalent metal cation. Residues aspartate 8–histidine 10 and histidine 34–serine 35 each bind 4-CDP-2-C-methyl-D-erythritol 2-phosphate. Residue histidine 42 participates in a divalent metal cation binding. 4-CDP-2-C-methyl-D-erythritol 2-phosphate-binding positions include aspartate 56–glycine 58, threonine 132–glutamate 135, phenylalanine 139, and arginine 142.

The protein belongs to the IspF family. In terms of assembly, homotrimer. It depends on a divalent metal cation as a cofactor.

It catalyses the reaction 4-CDP-2-C-methyl-D-erythritol 2-phosphate = 2-C-methyl-D-erythritol 2,4-cyclic diphosphate + CMP. It functions in the pathway isoprenoid biosynthesis; isopentenyl diphosphate biosynthesis via DXP pathway; isopentenyl diphosphate from 1-deoxy-D-xylulose 5-phosphate: step 4/6. In terms of biological role, involved in the biosynthesis of isopentenyl diphosphate (IPP) and dimethylallyl diphosphate (DMAPP), two major building blocks of isoprenoid compounds. Catalyzes the conversion of 4-diphosphocytidyl-2-C-methyl-D-erythritol 2-phosphate (CDP-ME2P) to 2-C-methyl-D-erythritol 2,4-cyclodiphosphate (ME-CPP) with a corresponding release of cytidine 5-monophosphate (CMP). The sequence is that of 2-C-methyl-D-erythritol 2,4-cyclodiphosphate synthase from Moorella thermoacetica (strain ATCC 39073 / JCM 9320).